A 1575-amino-acid polypeptide reads, in one-letter code: Mediator of RNA polymerase II transcription subunit 1 (1575 aa).

Residues 1 to 670 are interaction with the Mediator complex and THRA; it reads MKAQGETEDS…YGSSPLERQN (670 aa). An interaction with ESR1 region spans residues 16 to 590; the sequence is MSSLLERLHA…SIKDRHESVG (575 aa). Interaction with the Mediator complex regions lie at residues 108-212 and 215-390; these read FYVE…GYLT and SGGH…SLQG. Positions 405 to 644 are interaction with THRA; sequence PLILNMIRHQ…MAGNTKNHPM (240 aa). The segment at 542–789 is interaction with VDR; that stretch reads PASSPGYGMT…TDILSDIAEE (248 aa). Serine 588 carries the post-translational modification Phosphoserine. Residues 604 to 608 carry the LXXLL motif 1 motif; sequence LTSLL. 5 disordered regions span residues 609-706, 737-760, 791-818, 874-895, and 951-1564; these read QITG…QTED, HITP…SHPQ, SKLP…HSQS, SQSG…NDDF, and SGSQ…GEED. Residues 622-632 show a composition bias toward pro residues; it reads PTPPHHTPPPV. Residues 622–701 are interaction with GATA1; the sequence is PTPPHHTPPP…SSRVPPDKPK (80 aa). An interaction with PPARGC1A and THRA region spans residues 622-701; the sequence is PTPPHHTPPP…SSRVPPDKPK (80 aa). Positions 645 to 649 match the LXXLL motif 2 motif; it reads LMNLL. The span at 655 to 675 shows a compositional bias: polar residues; sequence QDFSTLYGSSPLERQNSSSGS. Positions 656 to 1066 are interaction with ESR1; it reads DFSTLYGSSP…TPPIPKITIQ (411 aa). Serine 664 is modified (phosphoserine). Positions 696–706 are enriched in basic and acidic residues; sequence PPDKPKHQTED. Phosphoserine is present on serine 795. Threonine 805 carries the post-translational modification Phosphothreonine. Positions 808-818 are enriched in polar residues; sequence RDSSSSGHSQS. The Integrase domain-binding motif (IBM) motif lies at 875–902; that stretch reads QSGFGEEYFDESSQSGDNDDFKGFASQA. Phosphoserine is present on residues serine 887, serine 953, and serine 955. Residues 963-974 show a composition bias toward basic and acidic residues; that stretch reads LGKEKTQKRVKE. The span at 976–986 shows a compositional bias: gly residues; that stretch reads NGTGASSGSGP. Threonine 1032 is modified (phosphothreonine; by MAPK1 or MAPK3). Residues 1034 to 1051 are compositionally biased toward low complexity; sequence PTSTGGSKSPGSSGRSQT. Phosphothreonine occurs at positions 1051 and 1057. 2 stretches are compositionally biased toward low complexity: residues 1078 to 1094 and 1101 to 1152; these read SSHS…SSGS and SSSS…SQTG. Serine 1158 carries the phosphoserine modification. Residues 1158 to 1184 show a composition bias toward polar residues; sequence SPITKHGLSSGSSSTKMKPQGKPSSLM. Lysine 1179 is subject to N6-acetyllysine. Low complexity predominate over residues 1185–1197; that stretch reads NPSISKPNISPSH. Phosphoserine is present on serine 1209. Threonine 1217 carries the phosphothreonine modification. 2 stretches are compositionally biased toward low complexity: residues 1220-1258 and 1265-1295; these read SSKA…GSVS and SNSC…SKGK. Residue serine 1225 is modified to Phosphoserine. The interaction with TP53 stretch occupies residues 1251–1423; that stretch reads SASSGSVSQK…KPGESGGDGL (173 aa). A phosphoserine mark is found at serine 1304 and serine 1349. A compositionally biased stretch (polar residues) spans 1331-1352; the sequence is MGASTNSSNHPMSSKHNTSGGE. Residues 1354 to 1366 show a composition bias toward basic and acidic residues; that stretch reads QSKREKSDKDKSK. A phosphoserine mark is found at serine 1405 and serine 1435. Composition is skewed to polar residues over residues 1427–1442 and 1450–1484; these read IASS…SGST and PSHS…SPSS. Residue threonine 1442 is modified to Phosphothreonine. Threonine 1459 carries the post-translational modification Phosphothreonine; by MAPK1 or MAPK3. Phosphoserine occurs at positions 1465, 1467, 1481, 1483, and 1484. The segment covering 1498-1507 has biased composition (basic residues); that stretch reads KHKKHKKEKK. Position 1523 is an N6-acetyllysine (lysine 1523). Polar residues predominate over residues 1527-1545; the sequence is WSKSPISSDPTASVTNNPI.

Belongs to the Mediator complex subunit 1 family. In terms of assembly, component of the Mediator complex, which is composed of MED1, MED4, MED6, MED7, MED8, MED9, MED10, MED11, MED12, MED13, MED13L, MED14, MED15, MED16, MED17, MED18, MED19, MED20, MED21, MED22, MED23, MED24, MED25, MED26, MED27, MED29, MED30, MED31, CCNC, CDK8 and CDC2L6/CDK11. The MED12, MED13, CCNC and CDK8 subunits form a distinct module termed the CDK8 module. Mediator containing the CDK8 module is less active than Mediator lacking this module in supporting transcriptional activation. Individual preparations of the Mediator complex lacking one or more distinct subunits have been variously termed ARC, CRSP, DRIP, PC2, SMCC and TRAP. This subunit specifically interacts with a number of nuclear receptors in a ligand-dependent fashion including AR, ESR1, ESR2, PPARA, PPARG, RORA, RXRA, RXRG, THRA, THRB and VDR. Interacts with CTNNB1, GABPA, GLI3, PPARGC1A and TP53. Interacts with GATA1 and YWHAH. Interacts with CLOCK; this interaction requires the presence of THRAP3. Interacts with CCAR1. Interacts with NR4A3. Interacts (via IBM motif) with PSIP1 (via IBD domain); phosphorylation increases its affinity for PSIP1. Interacts with USP22. Post-translationally, phosphorylated by MAPK1 or MAPK3 during G2/M phase which may enhance protein stability and promote entry into the nucleolus. Phosphorylation increases its interaction with PSIP1. Widely expressed in the adult, with high levels of expression in the liver, lung, intestinal mucosa, kidney cortex, thymic cortex, splenic follicle and seminiferous epithelium in testis. Also expressed in the adult heart, brain, spleen and skeletal muscle.

Its subcellular location is the nucleus. Its function is as follows. Component of the Mediator complex, a coactivator involved in the regulated transcription of nearly all RNA polymerase II-dependent genes. Mediator functions as a bridge to convey information from gene-specific regulatory proteins to the basal RNA polymerase II transcription machinery. Mediator is recruited to promoters by direct interactions with regulatory proteins and serves as a scaffold for the assembly of a functional preinitiation complex with RNA polymerase II and the general transcription factors. Essential for embryogenesis, including development of the central nervous system, heart, liver and placenta and for erythropoiesis. Also required for normal transcriptional control of thyroid-stimulating hormone beta (TSHB) in the pituitary. Acts as a coactivator for GATA1-mediated transcriptional activation during erythroid differentiation of K562 erythroleukemia cells. This Mus musculus (Mouse) protein is Mediator of RNA polymerase II transcription subunit 1 (Med1).